The following is a 104-amino-acid chain: MSSVFEIVNQARRKNKLKRELLDNEKKVRDNRKRVDLLENLLDYIKPEMTHDEIVAIIKNMKADYEDRVDDHIIKSAEISKARRDISRRIRELTEEDKQTSGKK.

2 coiled-coil regions span residues isoleucine 7–arginine 34 and serine 76–glutamate 96.

Belongs to the pole-localizer TmaR family.

Its subcellular location is the cytoplasm. In terms of biological role, pole-localizer protein involved in the regulation of several cellular processes. This Vibrio campbellii (strain ATCC BAA-1116) protein is Pole-localizer protein TmaR.